The primary structure comprises 343 residues: Tetraacyldisaccharide 4'-kinase (343 aa).

An ATP-binding site is contributed by 51 to 58 (HGGGAGKT).

The protein belongs to the LpxK family.

It carries out the reaction a lipid A disaccharide + ATP = a lipid IVA + ADP + H(+). It participates in glycolipid biosynthesis; lipid IV(A) biosynthesis; lipid IV(A) from (3R)-3-hydroxytetradecanoyl-[acyl-carrier-protein] and UDP-N-acetyl-alpha-D-glucosamine: step 6/6. Transfers the gamma-phosphate of ATP to the 4'-position of a tetraacyldisaccharide 1-phosphate intermediate (termed DS-1-P) to form tetraacyldisaccharide 1,4'-bis-phosphate (lipid IVA). The chain is Tetraacyldisaccharide 4'-kinase from Rhodopseudomonas palustris (strain BisB18).